Reading from the N-terminus, the 337-residue chain is Glycerol-3-phosphate dehydrogenase [NAD(P)+] (337 aa).

NADPH contacts are provided by Ser12, Trp13, and Lys110. Positions 110, 141, and 143 each coordinate sn-glycerol 3-phosphate. Ala145 lines the NADPH pocket. Sn-glycerol 3-phosphate-binding residues include Lys196, Asp249, Ser259, Arg260, and Asn261. The Proton acceptor role is filled by Lys196. Arg260 serves as a coordination point for NADPH. NADPH contacts are provided by Val284 and Glu286.

It belongs to the NAD-dependent glycerol-3-phosphate dehydrogenase family.

It is found in the cytoplasm. It carries out the reaction sn-glycerol 3-phosphate + NAD(+) = dihydroxyacetone phosphate + NADH + H(+). The catalysed reaction is sn-glycerol 3-phosphate + NADP(+) = dihydroxyacetone phosphate + NADPH + H(+). Its pathway is membrane lipid metabolism; glycerophospholipid metabolism. In terms of biological role, catalyzes the reduction of the glycolytic intermediate dihydroxyacetone phosphate (DHAP) to sn-glycerol 3-phosphate (G3P), the key precursor for phospholipid synthesis. The sequence is that of Glycerol-3-phosphate dehydrogenase [NAD(P)+] from Levilactobacillus brevis (strain ATCC 367 / BCRC 12310 / CIP 105137 / JCM 1170 / LMG 11437 / NCIMB 947 / NCTC 947) (Lactobacillus brevis).